A 436-amino-acid chain; its full sequence is GTPase Der (436 aa).

EngA-type G domains follow at residues 4-167 (PTVA…PVEE) and 175-351 (IRFS…ESQN). GTP is bound by residues 10–17 (GRPNVGKS), 57–61 (DTGGI), 119–122 (NKVD), 181–188 (GRPNVGKS), 229–233 (DTAGM), and 294–297 (NKWD). One can recognise a KH-like domain in the interval 352–436 (KRIPSAVLND…PIHLIARKRK (85 aa)).

The protein belongs to the TRAFAC class TrmE-Era-EngA-EngB-Septin-like GTPase superfamily. EngA (Der) GTPase family. In terms of assembly, associates with the 50S ribosomal subunit.

Its function is as follows. GTPase that plays an essential role in the late steps of ribosome biogenesis. This Streptococcus uberis (strain ATCC BAA-854 / 0140J) protein is GTPase Der.